An 88-amino-acid polypeptide reads, in one-letter code: Gene 86 protein (88 aa).

The interval 64-88 (WRGNPSAYDDEVGDLEGFETQHSDY) is disordered. Over residues 71-80 (YDDEVGDLEG) the composition is skewed to acidic residues.

The sequence is that of Gene 86 protein (86) from Mycobacterium (Mycobacteriophage L5).